The chain runs to 225 residues: Small ribosomal subunit protein uS3 (225 aa).

A KH type-2 domain is found at 38–106 (LRAFLRRKLS…DVALNIVEIR (69 aa)).

This sequence belongs to the universal ribosomal protein uS3 family. As to quaternary structure, part of the 30S ribosomal subunit. Forms a tight complex with proteins S10 and S14.

Binds the lower part of the 30S subunit head. Binds mRNA in the 70S ribosome, positioning it for translation. The polypeptide is Small ribosomal subunit protein uS3 (Gluconobacter oxydans (strain 621H) (Gluconobacter suboxydans)).